A 405-amino-acid polypeptide reads, in one-letter code: tRNA (uracil(54)-C(5))-methyltransferase (405 aa).

[4Fe-4S] cluster-binding residues include C61, C67, C70, and C137. Residues Q252, Y278, T283, 299–300 (DS), D326, and D340 contribute to the S-adenosyl-L-methionine site. Residue C367 is the Nucleophile of the active site. The active-site Proton acceptor is the E399.

This sequence belongs to the class I-like SAM-binding methyltransferase superfamily. RNA M5U methyltransferase family.

It carries out the reaction uridine(54) in tRNA + S-adenosyl-L-methionine = 5-methyluridine(54) in tRNA + S-adenosyl-L-homocysteine + H(+). With respect to regulation, activated by magnesium ions. Catalyzes the formation of 5-methyl-uridine at position 54 (m5U54) in tRNA. The sequence is that of tRNA (uracil(54)-C(5))-methyltransferase from Pyrococcus abyssi (strain GE5 / Orsay).